A 156-amino-acid chain; its full sequence is Small ribosomal subunit protein uS7 (156 aa).

Belongs to the universal ribosomal protein uS7 family. Part of the 30S ribosomal subunit. Contacts proteins S9 and S11.

Its function is as follows. One of the primary rRNA binding proteins, it binds directly to 16S rRNA where it nucleates assembly of the head domain of the 30S subunit. Is located at the subunit interface close to the decoding center, probably blocks exit of the E-site tRNA. This chain is Small ribosomal subunit protein uS7, found in Solibacter usitatus (strain Ellin6076).